The sequence spans 233 residues: Probable O-methyltransferase Rv1703c (233 aa).

S-adenosyl-L-methionine contacts are provided by residues valine 55, glutamate 77, 79 to 80 (GT), and glutamate 102. Aspartate 157 is a binding site for a divalent metal cation. Residue aspartate 159 coordinates S-adenosyl-L-methionine. Aspartate 185 and asparagine 186 together coordinate a divalent metal cation.

Belongs to the class I-like SAM-binding methyltransferase superfamily. Cation-dependent O-methyltransferase family.

Functionally, specifically methylates an O atom of its substrate. This chain is Probable O-methyltransferase Rv1703c, found in Mycobacterium tuberculosis (strain ATCC 25618 / H37Rv).